A 353-amino-acid chain; its full sequence is 2-oxoglutarate-dependent dioxygenase phqC (353 aa).

The Fe2OG dioxygenase domain maps to 199–315 (CASELRLNNY…RRSCAFFLKA (117 aa)). The Fe cation site is built by His-227, Asp-229, and His-287. Arg-302 is a binding site for 2-oxoglutarate.

Belongs to the iron/ascorbate-dependent oxidoreductase family. Fe(2+) serves as cofactor.

Its pathway is alkaloid biosynthesis. In terms of biological role, 2-oxoglutarate-dependent dioxygenase; part of the gene cluster that mediates the biosynthesis of paraherquamide, a fungal indole alkaloid that belongs to a family of natural products containing a characteristic bicyclo[2.2.2]diazaoctane core. The first steps in the biosynthesis of paraherquamide is the production of the beta-methyl-proline precursor from L-isoleucine. They require oxidation of a terminally hydroxylated L-isoleucine to the corresponding aldehyde by enzymes which have still to be identified. Spontaneous cyclization and dehydration would yield the 4-methyl pyrolline-5-carboxylic acid, which is then reduced by the pyrroline-5-carboxylate reductase phqD leading to the beta-methyl-proline precursor. The next step of paraherquamide biosynthesis involves coupling of beta-methyl-proline and L-tryptophan by the bimodular NRPS phqB, to produce a monooxopiperazine intermediate. The reductase (R) domain of phqB utilizes NADPH for hydride transfer to reduce the thioester bond of the T domain-tethered linear dipeptide to a hemithioaminal intermediate, which spontaneously cleaves the C-S bond to release the aldehyde product. This compound undergoes spontaneous cyclization and dehydration to give a dienamine which is reverse prenylated at C-2 by the reverse prenyltransferase phqJ. The other prenyltransferase present in the cluster, phqI may be a redundant gene in the pathway. During biosynthetic assembly, the key step to produce the polycyclic core is catalyzed by the bifunctional reductase and intramolecular [4+2] Diels-Alderase, phqE, resulting in formation of the [2.2.2] diazaoctane intermediate preparaherquamide. Following formation of preparaherquamide, an indole 2,3-epoxidation-initiated pinacol-like rearrangement is catalyzed by the phqK FAD-dependent monooxygenase. The prenyltransferase phqA, the cytochrome P450 monooxygenase phqL, and the FAD-linked oxidoreductase phqH (or the cytochrome P450 monooxygenase phqM), are proposed to be involved in the formation of the pyran ring. The FAD-dependent monooxygenase phqK is likely responsible for generation of the spiro-oxindole, and the N-methylation is likely mediated by the phqN methyltransferase leading to the isolable natural product paraherquamide F. However, the order of these biosynthetic steps has still to be determined. In late-stage paraherquamide biosynthesis, the third P450 monooxygenase, phqO, is probably responsible for the C-14 hydroxylation, transforming paraherquamide F to paraherquamide G, and paraherquamide E to the final product paraherquamide A. The expansion from the 6-membered ring pyran (in paraherquamides F and G) to the 7-membered dioxepin ring (in paraherquamides A and E) represents a poorly understood but intriguing process that probably involves the 2-oxoglutarate-dependent dioxygenase phqC. Finally, the remaining members of the paraherquamide cluster, including phqI as well as phqM (or phqH), do not have a clearly prescribed role and appear to be redundant. This is 2-oxoglutarate-dependent dioxygenase phqC from Penicillium fellutanum.